We begin with the raw amino-acid sequence, 422 residues long: Mannose-1-phosphate guanylyltransferase regulatory subunit alpha-B (422 aa).

A substrate-binding domain region spans residues 2-253 (LKAIILIGGP…QHFWSQIKSA (252 aa)). GDP-alpha-D-mannose is bound by residues Glu-85 and Gln-249. The tract at residues 275–422 (LATNQGGTPK…NRSFKNQIIL (148 aa)) is hexapeptide repeat domain. The interval 358–386 (TPSDPNPNDPYAKIDSETLFRDGGLTPSI) is C-loop.

It belongs to the transferase hexapeptide repeat family. As to quaternary structure, component of the GMPPA-GMPPB mannose-1-phosphate guanylyltransferase complex composed of 4 GMPPA subunits and 8 GMPPB subunits; the complex is organized into three layers, a central layer made up of 2 GMPPA dimers sandwiched between two layers each made up of 2 GMPPB dimers.

It functions in the pathway nucleotide-sugar biosynthesis; GDP-alpha-D-mannose biosynthesis; GDP-alpha-D-mannose from alpha-D-mannose 1-phosphate (GTP route): step 1/1. Functionally, regulatory subunit of the GMPPA-GMPPB mannose-1-phosphate guanylyltransferase complex; reduces the catalytic activity of GMPPB when part of the complex. Mediates allosteric feedback inhibition of GMPPB catalytic activity upon binding GDP-alpha-D-mannose. Together with GMPPB regulates GDP-alpha-D-mannose levels. One of two paralogs (gmppaa and gmppab) that may have redundant functions. The sequence is that of Mannose-1-phosphate guanylyltransferase regulatory subunit alpha-B (gmppab) from Danio rerio (Zebrafish).